Consider the following 239-residue polypeptide: MNTIVFVEDDAEVGSLIAAYLAKHDMQVTVEPRGDQAEETILRENPDLVLLDIMLPGKDGMTICRDLRAKWSGPIVLLTSLDSDMNHILALEMGACDYILKTTPPAVLLARLRLHLRQNEQATLTKGLQETSLTPYKALHFGTLTIDPINRVVTLANTEISLSTADFELLWELATHAGQIMDRDALLKNLRGVSYDGLDRSVDVAISRLRKKLLDNAAEPYRIKTVRNKGYLFAPHAWE.

One can recognise a Response regulatory domain in the interval 3 to 116 (TIVFVEDDAE…VLLARLRLHL (114 aa)). A 4-aspartylphosphate modification is found at aspartate 52. Residues 136–235 (YKALHFGTLT…VRNKGYLFAP (100 aa)) constitute a DNA-binding region (ompR/PhoB-type).

Phosphorylated by RstB.

The protein localises to the cytoplasm. Functionally, member of the two-component regulatory system RstB/RstA. The polypeptide is Transcriptional regulatory protein RstA (rstA) (Escherichia coli (strain K12)).